We begin with the raw amino-acid sequence, 175 residues long: Large ribosomal subunit protein uL18 (175 aa).

The protein belongs to the universal ribosomal protein uL18 family. As to quaternary structure, part of the 50S ribosomal subunit. Contacts the 5S and 23S rRNAs.

Functionally, this is one of the proteins that bind and probably mediate the attachment of the 5S RNA into the large ribosomal subunit, where it forms part of the central protuberance. This is Large ribosomal subunit protein uL18 from Methanosphaerula palustris (strain ATCC BAA-1556 / DSM 19958 / E1-9c).